The following is a 67-amino-acid chain: KKDGYPVEGDNCAFVCFGYDNAYCDKLCKDKKADSGYCYWVHILCYCYGLPDKEPTKTNGRCKPGKK.

Residues 2–63 (KDGYPVEGDN…EPTKTNGRCK (62 aa)) enclose the LCN-type CS-alpha/beta domain. Cystine bridges form between cysteine 12/cysteine 62, cysteine 16/cysteine 38, cysteine 24/cysteine 45, and cysteine 28/cysteine 47. The residue at position 64 (proline 64) is a Proline amide.

Belongs to the long (4 C-C) scorpion toxin superfamily. Sodium channel inhibitor family. Alpha subfamily. As to expression, expressed by the venom gland.

It localises to the secreted. Alpha toxins bind voltage-independently at site-3 of sodium channels (Nav) and inhibit the inactivation of the activated channels, thereby blocking neuronal transmission. This is Alpha-toxin Tf3 from Tityus fasciolatus (Central Brazilian scorpion).